The sequence spans 392 residues: Selenide, water dikinase 1 (392 aa).

The residue at position 2 (Ser-2) is an N-acetylserine. Cys-31 is an active-site residue. ATP contacts are provided by residues Lys-32, 67 to 69 (GMD), Asp-87, Asp-110, and 161 to 164 (GGQT). Asp-69 is a Mg(2+) binding site. Asp-110 is a Mg(2+) binding site. Asp-265 provides a ligand contact to Mg(2+).

This sequence belongs to the selenophosphate synthase 1 family. Class II subfamily. In terms of assembly, homodimer. Heterodimer with isoform 3. As to quaternary structure, homodimer. Heterodimer with isoform 4. Homodimer. Heterodimer with isoform 1. In terms of assembly, homodimer. Heterodimer with isoform 2. Mg(2+) is required as a cofactor. In terms of tissue distribution, gradually expressed during the cell cycle until G2/M phase and then decreases. As to expression, gradually expressed during the cell cycle until S phase and then decreases.

It is found in the cell membrane. The protein localises to the nucleus membrane. The protein resides in the cytoplasm. The enzyme catalyses hydrogenselenide + ATP + H2O = selenophosphate + AMP + phosphate + 2 H(+). Activated by phosphate ions and by potassium ions. In terms of biological role, synthesizes selenophosphate from selenide and ATP. In Homo sapiens (Human), this protein is Selenide, water dikinase 1 (SEPHS1).